The chain runs to 699 residues: tRNA 5-methylaminomethyl-2-thiouridine biosynthesis bifunctional protein MnmC (699 aa).

Residues 1–260 are tRNA (mnm(5)s(2)U34)-methyltransferase; it reads MTAKPQKSCQ…ERKLLRQQAD (260 aa). The FAD-dependent cmnm(5)s(2)U34 oxidoreductase stretch occupies residues 282 to 699; sequence VGGGLASANL…LRKLLKGKAL (418 aa).

In the N-terminal section; belongs to the methyltransferase superfamily. tRNA (mnm(5)s(2)U34)-methyltransferase family. This sequence in the C-terminal section; belongs to the DAO family. FAD is required as a cofactor.

It localises to the cytoplasm. It carries out the reaction 5-aminomethyl-2-thiouridine(34) in tRNA + S-adenosyl-L-methionine = 5-methylaminomethyl-2-thiouridine(34) in tRNA + S-adenosyl-L-homocysteine + H(+). In terms of biological role, catalyzes the last two steps in the biosynthesis of 5-methylaminomethyl-2-thiouridine (mnm(5)s(2)U) at the wobble position (U34) in tRNA. Catalyzes the FAD-dependent demodification of cmnm(5)s(2)U34 to nm(5)s(2)U34, followed by the transfer of a methyl group from S-adenosyl-L-methionine to nm(5)s(2)U34, to form mnm(5)s(2)U34. The sequence is that of tRNA 5-methylaminomethyl-2-thiouridine biosynthesis bifunctional protein MnmC from Shewanella sp. (strain MR-4).